Consider the following 63-residue polypeptide: Ferredoxin (63 aa).

The region spanning 3 to 31 (WKVSVDVDTCIGDAICASLCPDVFEMGDD) is the 4Fe-4S ferredoxin-type domain. [4Fe-4S] cluster contacts are provided by cysteine 12, aspartate 15, and cysteine 18. Residues cysteine 22 and cysteine 45 are joined by a disulfide bond. Cysteine 53 is a binding site for [4Fe-4S] cluster.

The cofactor is [4Fe-4S] cluster. It depends on [3Fe-4S] cluster as a cofactor.

Ferredoxins are iron-sulfur proteins that transfer electrons in a wide variety of metabolic reactions. The chain is Ferredoxin (fdxA) from Thermococcus kodakarensis (strain ATCC BAA-918 / JCM 12380 / KOD1) (Pyrococcus kodakaraensis (strain KOD1)).